A 72-amino-acid polypeptide reads, in one-letter code: Translation initiation factor IF-1 (72 aa).

The region spanning 1–72 is the S1-like domain; the sequence is MTKEDCIEMQ…SKGRIIFRSR (72 aa).

The protein belongs to the IF-1 family. In terms of assembly, component of the 30S ribosomal translation pre-initiation complex which assembles on the 30S ribosome in the order IF-2 and IF-3, IF-1 and N-formylmethionyl-tRNA(fMet); mRNA recruitment can occur at any time during PIC assembly.

It localises to the cytoplasm. One of the essential components for the initiation of protein synthesis. Stabilizes the binding of IF-2 and IF-3 on the 30S subunit to which N-formylmethionyl-tRNA(fMet) subsequently binds. Helps modulate mRNA selection, yielding the 30S pre-initiation complex (PIC). Upon addition of the 50S ribosomal subunit IF-1, IF-2 and IF-3 are released leaving the mature 70S translation initiation complex. The sequence is that of Translation initiation factor IF-1 from Buchnera aphidicola subsp. Baizongia pistaciae (strain Bp).